The sequence spans 326 residues: Heterodimeric geranylgeranyl pyrophosphate synthase small subunit, chloroplastic (326 aa).

Residues 1–33 (MLFSGSAIPLSSFCSLPEKPHTLPMKLSPAAIR) constitute a chloroplast transit peptide. Residues lysine 88 and histidine 120 each contribute to the isopentenyl diphosphate site. Mg(2+) contacts are provided by aspartate 127 and aspartate 133. Arginine 138 provides a ligand contact to dimethylallyl diphosphate. Arginine 139 provides a ligand contact to isopentenyl diphosphate. Residues lysine 220 and glutamine 258 each coordinate dimethylallyl diphosphate. Residues 274–301 (GAEKGMMEMAEELKEKAKKELQVFDNKY) are a coiled coil.

This sequence belongs to the FPP/GGPP synthase family. As to quaternary structure, part of a heterodimeric geranyl(geranyl)diphosphate synthase. Interacts with GGPPS1 or GGPPS2, but not with GGPPS9. Interacts with LIL3.1 and LIL3.2. The cofactor is Mg(2+). As to expression, expressed ubiquitously.

Its subcellular location is the plastid. It localises to the chloroplast thylakoid membrane. In terms of biological role, heterodimeric geranyl(geranyl)-diphosphate (GPP) synthase small subunit. The small subunit alone is inactive in vitro while the large subunit GGPPS1 catalyzes mainly the production of geranygeranyl-diphosphate in vitro. Upon association of the two subunits, the product profile changes and the production of gerany-diphosphate is strongly increased. This chain is Heterodimeric geranylgeranyl pyrophosphate synthase small subunit, chloroplastic (GGR), found in Arabidopsis thaliana (Mouse-ear cress).